The primary structure comprises 37 residues: Cytochrome b6-f complex subunit 5 (37 aa).

A helical membrane pass occupies residues 5 to 25 (LLSGIVLGLVPVTIAGLFVTA).

Belongs to the PetG family. The 4 large subunits of the cytochrome b6-f complex are cytochrome b6, subunit IV (17 kDa polypeptide, PetD), cytochrome f and the Rieske protein, while the 4 small subunits are PetG, PetL, PetM and PetN. The complex functions as a dimer.

It is found in the plastid. The protein resides in the chloroplast thylakoid membrane. In terms of biological role, component of the cytochrome b6-f complex, which mediates electron transfer between photosystem II (PSII) and photosystem I (PSI), cyclic electron flow around PSI, and state transitions. PetG is required for either the stability or assembly of the cytochrome b6-f complex. In Stigeoclonium helveticum (Green alga), this protein is Cytochrome b6-f complex subunit 5.